A 209-amino-acid chain; its full sequence is Kynurenine formamidase (209 aa).

A substrate-binding site is contributed by tryptophan 20. Histidine 50, histidine 54, and aspartate 56 together coordinate Zn(2+). The Proton donor/acceptor role is filled by histidine 60. Zn(2+) is bound by residues histidine 161 and glutamate 173.

Belongs to the Cyclase 1 superfamily. KynB family. Homodimer. Requires Zn(2+) as cofactor.

It carries out the reaction N-formyl-L-kynurenine + H2O = L-kynurenine + formate + H(+). The protein operates within amino-acid degradation; L-tryptophan degradation via kynurenine pathway; L-kynurenine from L-tryptophan: step 2/2. Its function is as follows. Catalyzes the hydrolysis of N-formyl-L-kynurenine to L-kynurenine, the second step in the kynurenine pathway of tryptophan degradation. In Bacillus mycoides (strain KBAB4) (Bacillus weihenstephanensis), this protein is Kynurenine formamidase.